A 131-amino-acid chain; its full sequence is Secreted RxLR effector protein 45 (131 aa).

The first 16 residues, 1-16 (MSIFIFISLVLGLAHQ), serve as a signal peptide directing secretion. The RxLR signature appears at 56–59 (RPLR). Asn128 carries N-linked (GlcNAc...) asparagine glycosylation.

The protein belongs to the RxLR effector family.

The protein localises to the secreted. It localises to the host nucleus. Secreted effector that completely suppresses the host cell death induced by cell death-inducing proteins. This Plasmopara viticola (Downy mildew of grapevine) protein is Secreted RxLR effector protein 45.